A 206-amino-acid chain; its full sequence is Sortase A (206 aa).

Residues 1 to 6 (MKKWTN) are Cytoplasmic-facing. A helical membrane pass occupies residues 7–24 (RLMTIAGVVLILVAAYLF). Topologically, residues 25 to 206 (AKPHIDNYLH…RKIFVATEVK (182 aa)) are extracellular. The disordered stretch occupies residues 49–69 (VKEQASKDKKQQAKPQIPKDK). Ca(2+) is bound by residues glutamate 105, glutamate 108, aspartate 112, and asparagine 114. The Proton donor/acceptor role is filled by histidine 120. Glutamate 171 is a Ca(2+) binding site. Residue cysteine 184 is the Acyl-thioester intermediate of the active site.

This sequence belongs to the bacterial sortase family. Class A subfamily. Monomer and homodimer; in equilibrium.

It localises to the cell membrane. It catalyses the reaction The enzyme catalyzes a cell wall sorting reaction in which a surface protein with a sorting signal containing a LPXTG motif is cleaved between the Thr and Gly residue. The resulting threonine carboxyl end of the protein is covalently attached to a pentaglycine cross-bridge of peptidoglycan.. With respect to regulation, sortase activity is regulated by monomer-homodimer equilibrium. Mutant cells with monomeric SrtA display more adhesive proteins on the cell surface and are more invasive than wild-type cells, which have majority of SrtA in dimeric form. Dimerization may suppress the enzymatic activity on cell membranes. Stimulated by calcium ions, which promote substrate binding. Calcium ions bind to SrtA and modulate both the structure and dynamics of a large active site loop. Can also be stimulated, to a lesser extent, by Mg(2+) and Mn(2+). Inhibited by sulfhydryl-modifying reagents. Transpeptidase that anchors surface proteins to the cell wall. Recognizes and modifies its substrate by proteolytic cleavage of a C-terminal sorting signal. Following cleavage, a covalent intermediate is formed via a thioester bond between the sortase and its substrate, which is then transferred and covalently attached to the cell wall. This sortase recognizes a Leu-Pro-x-Thr-Gly (LPXTG) motif, which is cleaved by the sortase between the threonine and glycine residues. Utilizes lipid II as the peptidoglycan substrate for the sorting reaction. Responsible for the display of important virulence factors. Important for interactions with the host and host colonization during infection. The protein is Sortase A of Staphylococcus aureus (strain NCTC 8325 / PS 47).